The following is a 579-amino-acid chain: Lens epithelium-derived growth factor (579 aa).

The 64-residue stretch at 1 to 64 (MSRDFKPGDL…PKDIFPYSEN (64 aa)) folds into the PWWP domain. 4 disordered regions span residues 62–81 (SENK…NEGL), 88–203 (PKVK…EEAA), 215–397 (AAPV…SMDS), and 492–579 (AEQK…FENK). Polar residues predominate over residues 94–107 (HQPSHPAVNTSIKE). The span at 153 to 173 (KEMHSTKEDEEPSEKNSKEGV) shows a compositional bias: basic and acidic residues. The span at 184–193 (VARRGRKRKA) shows a compositional bias: basic residues. A Nuclear localization signal motif is present at residues 186 to 196 (RRGRKRKAEKQ). Residues 215–224 (AAPVTVSPKV) are compositionally biased toward low complexity. Residues 261 to 308 (EEEKAKKKGPDEKPKKQGKKDEEGQKEEEKPKKEYDKKDGKKEAEPKR) show a composition bias toward basic and acidic residues. Residues 321–330 (DSEDEGGEEE) show a composition bias toward acidic residues. Positions 334–349 (KKKGGRSFQSTHRRNI) are enriched in basic residues. The stretch at 347–442 (RNIMRGQHEK…SMQQAQKHTE (96 aa)) forms a coiled coil. Composition is skewed to basic and acidic residues over residues 352–397 (GQHE…SMDS) and 492–522 (AEQK…KDQT). An integrase-binding domain (IBD) region spans residues 387 to 464 (MEKKRETSMD…VSQVIMEKST (78 aa)). Over residues 530-543 (GSETQDTNQSQHNG) the composition is skewed to polar residues. The segment covering 544 to 579 (ENAEEKDKLEVASKKKTCGEESELEKPAKESAFENK) has biased composition (basic and acidic residues).

This sequence belongs to the HDGF family.

It is found in the nucleus. In terms of biological role, transcriptional coactivator involved in neuroepithelial stem cell differentiation and neurogenesis. Involved in particular in lens epithelial cell gene regulation and stress responses. May play an important role in lens epithelial to fiber cell terminal differentiation. May play a protective role during stress-induced apoptosis. This is Lens epithelium-derived growth factor (PSIP1) from Gallus gallus (Chicken).